A 29-amino-acid polypeptide reads, in one-letter code: 28 kDa protein (29 aa).

The polypeptide is 28 kDa protein (Tritrichomonas foetus (Trichomonas foetus)).